We begin with the raw amino-acid sequence, 401 residues long: Elongation factor Tu (401 aa).

One can recognise a tr-type G domain in the interval 10 to 209 (KPHINVGTIG…AVDEYIPTPQ (200 aa)). The G1 stretch occupies residues 19–26 (GHVDHGKT). 19-26 (GHVDHGKT) provides a ligand contact to GTP. Thr26 lines the Mg(2+) pocket. Residues 60–64 (GITIA) form a G2 region. The G3 stretch occupies residues 81–84 (DCPG). Residues 81-85 (DCPGH) and 136-139 (NKVD) each bind GTP. A G4 region spans residues 136 to 139 (NKVD). The interval 174-176 (SAR) is G5.

This sequence belongs to the TRAFAC class translation factor GTPase superfamily. Classic translation factor GTPase family. EF-Tu/EF-1A subfamily. As to quaternary structure, monomer.

It localises to the cytoplasm. It catalyses the reaction GTP + H2O = GDP + phosphate + H(+). Its function is as follows. GTP hydrolase that promotes the GTP-dependent binding of aminoacyl-tRNA to the A-site of ribosomes during protein biosynthesis. This chain is Elongation factor Tu, found in Chloroflexus aurantiacus (strain ATCC 29366 / DSM 635 / J-10-fl).